The chain runs to 215 residues: Peptide methionine sulfoxide reductase MsrA (215 aa).

Residue cysteine 58 is part of the active site.

Belongs to the MsrA Met sulfoxide reductase family.

The enzyme catalyses L-methionyl-[protein] + [thioredoxin]-disulfide + H2O = L-methionyl-(S)-S-oxide-[protein] + [thioredoxin]-dithiol. It carries out the reaction [thioredoxin]-disulfide + L-methionine + H2O = L-methionine (S)-S-oxide + [thioredoxin]-dithiol. Has an important function as a repair enzyme for proteins that have been inactivated by oxidation. Catalyzes the reversible oxidation-reduction of methionine sulfoxide in proteins to methionine. This Pseudomonas savastanoi pv. phaseolicola (strain 1448A / Race 6) (Pseudomonas syringae pv. phaseolicola (strain 1448A / Race 6)) protein is Peptide methionine sulfoxide reductase MsrA.